The following is a 55-amino-acid chain: Neurotoxin B-II (55 aa).

Residue Pro10 is modified to Hydroxyproline. 4 disulfide bridges follow: Cys12/Cys48, Cys16/Cys52, Cys23/Cys41, and Cys26/Cys37.

Belongs to the worm B-toxin family.

The protein resides in the secreted. This toxin increases the excitability of nerves by delaying the inactivation of the voltage-gated sodium channel (Nav). Only acts on some crustacean. Neurotoxin B-II is less abundant, but 15-fold more toxic than neurotoxin B-VI. The chain is Neurotoxin B-II from Cerebratulus lacteus (Milky ribbon worm).